The primary structure comprises 237 residues: Peroxisomal membrane protein 11-1 (237 aa).

Residues 1-92 (MSTLDATRAE…TLVLLGKSKN (92 aa)) lie on the Cytoplasmic side of the membrane. Residues 93–113 (ALLSTFLFLDQFVWLGRTGIY) form a helical membrane-spanning segment. Topologically, residues 114–204 (KNKERTDRIV…VGLLQLSPKK (91 aa)) are lumenal. A helical transmembrane segment spans residues 205–223 (ITPRVTGAFGFVTSLISCY). Over 224-237 (QQLPSRAPAIKVKA) the chain is Cytoplasmic.

It belongs to the peroxin-11 family. As to expression, expressed in seedlings, leaf sheaths, flag leaf, panicles and spikelets.

It is found in the peroxisome membrane. Functionally, involved in peroxisomal proliferation. In Oryza sativa subsp. japonica (Rice), this protein is Peroxisomal membrane protein 11-1 (PEX11-1).